The primary structure comprises 687 residues: Light-independent protochlorophyllide reductase subunit B (687 aa).

D36 is a [4Fe-4S] cluster binding site. D441 serves as the catalytic Proton donor. A substrate-binding site is contributed by 576 to 577 (GM).

This sequence belongs to the ChlB/BchB/BchZ family. Protochlorophyllide reductase is composed of three subunits; ChlL, ChlN and ChlB. Forms a heterotetramer of two ChlB and two ChlN subunits. The cofactor is [4Fe-4S] cluster.

It localises to the plastid. It is found in the chloroplast. The enzyme catalyses chlorophyllide a + oxidized 2[4Fe-4S]-[ferredoxin] + 2 ADP + 2 phosphate = protochlorophyllide a + reduced 2[4Fe-4S]-[ferredoxin] + 2 ATP + 2 H2O. It participates in porphyrin-containing compound metabolism; chlorophyll biosynthesis (light-independent). Component of the dark-operative protochlorophyllide reductase (DPOR) that uses Mg-ATP and reduced ferredoxin to reduce ring D of protochlorophyllide (Pchlide) to form chlorophyllide a (Chlide). This reaction is light-independent. The NB-protein (ChlN-ChlB) is the catalytic component of the complex. This is Light-independent protochlorophyllide reductase subunit B from Chlamydomonas reinhardtii (Chlamydomonas smithii).